Consider the following 199-residue polypeptide: Ras-related protein Rab-7b (199 aa).

GTP-binding positions include 15-22 (GALGVGKT), 34-40 (FEEYQTT), 63-67 (DTGGQ), 124-127 (NKID), and 154-155 (AK). Short sequence motifs (switch) lie at residues 28–41 (YVHK…QTTL) and 67–82 (QERF…KGSD). The residue at position 186 (S186) is a Phosphoserine. Residues C198 and C199 are each lipidated (S-geranylgeranyl cysteine).

Belongs to the small GTPase superfamily. Rab family.

The protein resides in the late endosome. The protein localises to the lysosome. It is found in the golgi apparatus. Its subcellular location is the trans-Golgi network. It localises to the cytoplasmic vesicle. The protein resides in the phagosome. The protein localises to the phagosome membrane. Its function is as follows. Controls vesicular trafficking from endosomes to the trans-Golgi network (TGN). Acts as a negative regulator of TLR9 signaling and can suppress TLR9-triggered TNFA, IL6, and IFNB production in macrophages by promoting TLR9 lysosomal degradation. Also negatively regulates TLR4 signaling in macrophages by promoting lysosomal degradation of TLR4. Promotes megakaryocytic differentiation by increasing NF-kappa-B-dependent IL6 production and subsequently enhancing the association of STAT3 with GATA1. Not involved in the regulation of the EGF- and EGFR degradation pathway. The chain is Ras-related protein Rab-7b (Rab7b) from Mus musculus (Mouse).